The following is a 225-amino-acid chain: NAD(P)H-quinone oxidoreductase subunit K, chloroplastic (225 aa).

Cys43, Cys44, Cys108, and Cys139 together coordinate [4Fe-4S] cluster.

The protein belongs to the complex I 20 kDa subunit family. As to quaternary structure, NDH is composed of at least 16 different subunits, 5 of which are encoded in the nucleus. [4Fe-4S] cluster is required as a cofactor.

Its subcellular location is the plastid. The protein localises to the chloroplast thylakoid membrane. The catalysed reaction is a plastoquinone + NADH + (n+1) H(+)(in) = a plastoquinol + NAD(+) + n H(+)(out). The enzyme catalyses a plastoquinone + NADPH + (n+1) H(+)(in) = a plastoquinol + NADP(+) + n H(+)(out). In terms of biological role, NDH shuttles electrons from NAD(P)H:plastoquinone, via FMN and iron-sulfur (Fe-S) centers, to quinones in the photosynthetic chain and possibly in a chloroplast respiratory chain. The immediate electron acceptor for the enzyme in this species is believed to be plastoquinone. Couples the redox reaction to proton translocation, and thus conserves the redox energy in a proton gradient. This chain is NAD(P)H-quinone oxidoreductase subunit K, chloroplastic, found in Carica papaya (Papaya).